A 70-amino-acid chain; its full sequence is Putative membrane protein insertion efficiency factor (70 aa).

The protein belongs to the UPF0161 family.

It is found in the cell membrane. Its function is as follows. Could be involved in insertion of integral membrane proteins into the membrane. The sequence is that of Putative membrane protein insertion efficiency factor from Clostridium novyi (strain NT).